Reading from the N-terminus, the 260-residue chain is Cell division protein DivIB (260 aa).

Over 1 to 25 the chain is Cytoplasmic; it reads MGAQDQNGKNHGGLFRDFQNRNVKK. A helical transmembrane segment spans residues 26–46; sequence MWPLVMPITIILLVMIFMISS. Topologically, residues 47–260 are extracellular; it reads YSRVKKVTVS…STKTTSVQGY (214 aa). The POTRA domain maps to 48-119; it reads SRVKKVTVSG…NQVKIKVEEY (72 aa).

The protein belongs to the FtsQ/DivIB family. DivIB subfamily.

The protein localises to the cell membrane. Cell division protein that may be involved in stabilizing or promoting the assembly of the division complex. In Lentilactobacillus buchneri (strain NRRL B-30929) (Lactobacillus buchneri), this protein is Cell division protein DivIB.